A 551-amino-acid polypeptide reads, in one-letter code: MSTPFPKTADKVKGVQILGPIPDEAKHIFNQETLAFVATLHRGFEARRQELLNNRKEQQKLRDQGFLPDFLPETEYIRNDSTWTGPALAPGLIDRRCEITGPTDRKMVINALNSNVATYMADFEDSLTPAWKNLVEGQVNLYDAVRRNLSATINGKQYNLNLEKGRHIPTLIVRPRGWHLTEKHVLVDGTPVSGGIFDFAVYFYNSAKEAIAQGFGPYFYLPKMEHHLEAKLWNDIFNYSQDYIGLKRGTIRASVLIETIPAVFQMDEIIYQLREHSAGLNCGRWDYIFSYIKCLRNHPDFILPDRSQVTMAAPFMSSYVKLLVHTTHKRKVHALGGMAAQIPIKDDEARNRAALENVTKDKLREVTLGCDSCWVAHPALVPVVLKVFNEHMKGPNQISLPPKEPFKPITQRDLLSPFVPGAKITEQGIRANIVIGISYIEAWLRNVGCVPINYLMEDAATAEVSRTQIWQWVTHGAKTDTGKVITKEYVKQLLDEEYAKLTKNAKPGNKFKRAFEYFAPEALGEKYSDFVTTLIYDDVTTIGRALPGERL.

The active-site Proton acceptor is arginine 174. Aspartate 458 functions as the Proton donor in the catalytic mechanism.

This sequence belongs to the malate synthase family.

Its subcellular location is the glyoxysome. It catalyses the reaction glyoxylate + acetyl-CoA + H2O = (S)-malate + CoA + H(+). It functions in the pathway carbohydrate metabolism; glyoxylate cycle; (S)-malate from isocitrate: step 2/2. This is Malate synthase, glyoxysomal (PMS1) from Candida tropicalis (Yeast).